Reading from the N-terminus, the 318-residue chain is Thioredoxin reductase (318 aa).

36 to 43 (TGMQQGGQ) contacts FAD. Residues cysteine 136 and cysteine 139 are joined by a disulfide bond. Residue 286–295 (DVMDHNYRQA) participates in FAD binding.

This sequence belongs to the class-II pyridine nucleotide-disulfide oxidoreductase family. Homodimer. Requires FAD as cofactor.

Its subcellular location is the cytoplasm. The enzyme catalyses [thioredoxin]-dithiol + NADP(+) = [thioredoxin]-disulfide + NADPH + H(+). The sequence is that of Thioredoxin reductase (trxB) from Vibrio cholerae serotype O1 (strain ATCC 39315 / El Tor Inaba N16961).